The following is a 1440-amino-acid chain: Glucose transporter type 1 (1440 aa).

A signal peptide spans 1–23; that stretch reads MAFLCAPGLTFFLTYSIFSAVLG. Topologically, residues 24-67 are cytoplasmic; that stretch reads MLQFGYNTGVINAPEKNIENFMKDVYKDRYGEDISEEFIQQLYS. A helical transmembrane segment spans residues 68–88; that stretch reads VAVSIFAIGGMLGGFSGGWMA. Over 89–95 the chain is Extracellular; that stretch reads NRFGRKG. The helical transmembrane segment at 96-116 threads the bilayer; it reads GLLLNNVLGIAGACLMGFTKV. The Cytoplasmic portion of the chain corresponds to 117–127; it reads SHSYEMLFLGR. A helical membrane pass occupies residues 128–148; sequence FIIGVNCGLNTSLVPMYISEI. The Extracellular portion of the chain corresponds to 149–162; that stretch reads APLNLRGGLGTVNQ. Q162 serves as a coordination point for D-glucose. Residues 163–183 form a helical membrane-spanning segment; that stretch reads LAVTVGLLLSQVLGIEQILGT. At 184–186 the chain is on the cytoplasmic side; that stretch reads NEG. Residues 187-207 traverse the membrane as a helical segment; sequence WPILLGLAICPAILQLILLPV. The Extracellular portion of the chain corresponds to 208 to 272; sequence CPESPRYLLI…LICSPTLRPP (65 aa). A helical membrane pass occupies residues 273 to 293; sequence LIIGIVMQLSQQFSGINAVFY. Residues 283–284 and N289 contribute to the D-glucose site; that span reads QQ. At 294 to 310 the chain is on the cytoplasmic side; the sequence is YSTSLFMSSGLTEESAK. A helical transmembrane segment spans residues 311–331; the sequence is FATIGIGAIMVVMTLVSIPLM. Residues 332–339 lie on the Extracellular side of the membrane; that stretch reads DRTGRRTL. The helical transmembrane segment at 340-360 threads the bilayer; it reads HLYGLGGMFIFSIFITISFLI. Topologically, residues 361 to 372 are cytoplasmic; sequence KEMIDWMSYLSV. The helical transmembrane segment at 373 to 393 threads the bilayer; sequence VATLGFVVFFAVGPGSIPWMI. W391 is a D-glucose binding site. The Extracellular portion of the chain corresponds to 394 to 405; sequence TAELFSQGPRPS. A helical membrane pass occupies residues 406–426; sequence AMAIAVLVNWMANFVVGIGFP. Topologically, residues 427–429 are cytoplasmic; sequence SMK. Residues 430–450 traverse the membrane as a helical segment; that stretch reads TALENYTFLPFSVFLAIFWIF. The Extracellular segment spans residues 451–534; the sequence is TYKKVPETKN…GPYPLSDSTN (84 aa). N460 and N480 each carry an N-linked (GlcNAc...) asparagine glycan. Residues 535–555 form a helical membrane-spanning segment; it reads LLGPGSSSYGPGGVLGLAGSG. Over 556–1440 the chain is Cytoplasmic; the sequence is SGLGGQCYTN…RKYTDFLRKK (885 aa). Disordered stretches follow at residues 628-708, 725-808, 966-987, 1000-1083, 1304-1330, and 1380-1401; these read ERFL…SRYA, QANP…HSVM, APEG…SELP, FLAD…GSYH, LEGA…PLTH, and ANSP…GHHV. The span at 669 to 678 shows a compositional bias: polar residues; that stretch reads PPDSASVRST. The segment covering 686–704 has biased composition (low complexity); the sequence is QPQQVHHQQQQVHHQQQHQ. The span at 730 to 739 shows a compositional bias: pro residues; it reads QAPPQQPAPP. Positions 754-789 are enriched in basic residues; the sequence is CQQRKHSHSPHHSRHTSPHSHHHHSHHSRHSRRSRR. A compositionally biased stretch (low complexity) spans 1313–1330; that stretch reads STTSEHSSSLPSPQPLTH.

It belongs to the major facilitator superfamily. Sugar transporter (TC 2.A.1.1) family. Glucose transporter subfamily.

The protein resides in the membrane. Facilitative glucose transporter. This Drosophila melanogaster (Fruit fly) protein is Glucose transporter type 1 (Glut1).